Consider the following 402-residue polypeptide: Flavohemoprotein (402 aa).

Residues methionine 1 to arginine 138 form the Globin domain. Histidine 85 lines the heme b pocket. Catalysis depends on charge relay system residues tyrosine 95 and glutamate 137. The reductase stretch occupies residues glycine 149–alanine 402. Positions threonine 152–aspartate 261 constitute an FAD-binding FR-type domain. Residues tyrosine 190 and arginine 206–serine 209 each bind FAD. Glycine 274–proline 279 serves as a coordination point for NADP(+). Valine 395–threonine 398 lines the FAD pocket.

It belongs to the globin family. Two-domain flavohemoproteins subfamily. The protein in the C-terminal section; belongs to the flavoprotein pyridine nucleotide cytochrome reductase family. It depends on heme b as a cofactor. FAD serves as cofactor.

It carries out the reaction 2 nitric oxide + NADPH + 2 O2 = 2 nitrate + NADP(+) + H(+). It catalyses the reaction 2 nitric oxide + NADH + 2 O2 = 2 nitrate + NAD(+) + H(+). Is involved in NO detoxification in an aerobic process, termed nitric oxide dioxygenase (NOD) reaction that utilizes O(2) and NAD(P)H to convert NO to nitrate, which protects the bacterium from various noxious nitrogen compounds. Therefore, plays a central role in the inducible response to nitrosative stress. The protein is Flavohemoprotein of Bordetella pertussis (strain Tohama I / ATCC BAA-589 / NCTC 13251).